The primary structure comprises 205 residues: Anaerobic dimethyl sulfoxide reductase chain B (205 aa).

3 consecutive 4Fe-4S ferredoxin-type domains span residues 5 to 33 (YGFF…LTPE), 59 to 89 (FAYY…KRED), and 90 to 119 (GFVV…YNET). Residues cysteine 14, cysteine 17, cysteine 20, cysteine 24, cysteine 67, cysteine 70, cysteine 75, cysteine 79, cysteine 99, cysteine 102, cysteine 105, cysteine 109, cysteine 126, cysteine 129, cysteine 141, and cysteine 145 each coordinate [4Fe-4S] cluster. The disordered stretch occupies residues 184 to 205 (KPNANSRPTGDTTGYLANPKEV). Residues 186 to 195 (NANSRPTGDT) are compositionally biased toward polar residues.

As to quaternary structure, heterotrimeric enzyme composed of a catalytic heterodimer (DmsAB) and a membrane anchor protein (DmsC). [4Fe-4S] cluster serves as cofactor.

In terms of biological role, electron transfer subunit of the terminal reductase during anaerobic growth on various sulfoxide and N-oxide compounds. This chain is Anaerobic dimethyl sulfoxide reductase chain B (dmsB), found in Shigella flexneri.